Here is a 363-residue protein sequence, read N- to C-terminus: Cytochrome P450 CYP82D47 (363 aa).

Cys342 lines the heme pocket.

The protein belongs to the cytochrome P450 family. The cofactor is heme.

Probable heme-thiolate monooxygenase. The protein is Cytochrome P450 CYP82D47 of Panax ginseng (Korean ginseng).